Reading from the N-terminus, the 133-residue chain is uncharacterized protein (133 aa).

The first 22 residues, methionine 1 to glycine 22, serve as a signal peptide directing secretion. The N-linked (GlcNAc...) asparagine glycan is linked to asparagine 111.

Its subcellular location is the secreted. This is an uncharacterized protein from Saccharomyces cerevisiae (strain ATCC 204508 / S288c) (Baker's yeast).